The following is a 176-amino-acid chain: RNA pyrophosphohydrolase (176 aa).

The 144-residue stretch at 6–149 (GYRPNVGIVI…KRDVYRRVMK (144 aa)) folds into the Nudix hydrolase domain. Positions 38–59 (GGINPGESAEQAMYRELFEEVG) match the Nudix box motif.

Belongs to the Nudix hydrolase family. RppH subfamily. It depends on a divalent metal cation as a cofactor.

Its function is as follows. Accelerates the degradation of transcripts by removing pyrophosphate from the 5'-end of triphosphorylated RNA, leading to a more labile monophosphorylated state that can stimulate subsequent ribonuclease cleavage. The sequence is that of RNA pyrophosphohydrolase from Klebsiella pneumoniae (strain 342).